The following is a 492-amino-acid chain: Cytochrome P450 monooxygenase MYCFIDRAFT_204672 (492 aa).

N-linked (GlcNAc...) asparagine glycosylation is present at asparagine 116. The helical transmembrane segment at 269–293 threads the bilayer; the sequence is FLISMIFISAANGCVVSGAMLYSIA. N-linked (GlcNAc...) asparagine glycosylation occurs at asparagine 335. Cysteine 430 lines the heme pocket.

It belongs to the cytochrome P450 family. Requires heme as cofactor.

It is found in the membrane. The protein operates within secondary metabolite biosynthesis. Cytochrome P450 monooxygenase; part of the gene cluster that mediates the biosynthesis of an emodin derivative that may be involved in black Sigatoka disease of banana. The pathway begins with the synthesis of atrochrysone thioester by the polyketide synthase PKS8-1. The atrochrysone carboxyl ACP thioesterase MYCFIDRAFT_190111 then breaks the thioester bond and releases the atrochrysone carboxylic acid from PKS8-1. The decarboxylase MYCFIDRAFT_34057 then catalyzes the concerted decarboxylation-elimination required to convert atochrysone carboxylic acid into emodin anthrone, which is further oxidized to emodin by the anthrone oxygenase MYCFIDRAFT_34418. The functions of the other tailoring enzymes as well as the final product of the cluster have still to be identified. The polypeptide is Cytochrome P450 monooxygenase MYCFIDRAFT_204672 (Pseudocercospora fijiensis (strain CIRAD86) (Black leaf streak disease fungus)).